The following is a 591-amino-acid chain: Probable methyltransferase PMT6 (591 aa).

Residues 1 to 13 (MRGSVIGAERSGQ) lie on the Cytoplasmic side of the membrane. A helical; Signal-anchor for type II membrane protein membrane pass occupies residues 14–34 (TIMVALVLMVGSFYTGSLFGT). Residues 35–591 (NQPIYVSHPS…FCRKRFWAII (557 aa)) are Lumenal-facing. N87, N99, N146, N193, N323, N436, N473, and N515 each carry an N-linked (GlcNAc...) asparagine glycan.

This sequence belongs to the methyltransferase superfamily.

Its subcellular location is the endoplasmic reticulum membrane. The polypeptide is Probable methyltransferase PMT6 (Arabidopsis thaliana (Mouse-ear cress)).